Reading from the N-terminus, the 591-residue chain is Acetyltransferase spyB (591 aa).

An N-linked (GlcNAc...) asparagine glycan is attached at asparagine 114. The next 9 helical transmembrane spans lie at glycine 123 to leucine 143, threonine 168 to leucine 188, leucine 199 to glycine 219, valine 228 to leucine 248, serine 309 to alanine 329, alanine 383 to glycine 403, isoleucine 453 to isoleucine 473, isoleucine 481 to tryptophan 501, and leucine 529 to proline 549.

Belongs to the wax synthase family.

The protein localises to the membrane. It catalyses the reaction sartorypyrone F + acetyl-CoA = sartorypyrone G + CoA. It carries out the reaction sartorypyrone D + acetyl-CoA = sartorypyrone A + CoA. The protein operates within secondary metabolite biosynthesis; terpenoid biosynthesis. Acetyltransferase; part of the gene cluster that mediates the biosynthesis of meroterpenoids called sartorypyrones. SpyB catalyzes the last step of the pathway and is responsible for the acetylation of sartorypyrones D and F to produce sartorypyrones A and G, respectively. The biosynthesis of sartorypyrones begins with the production of triacetic acid lactone (TAL) by the NR-PKS spyA using one molecule of acetyl-CoA and two molecules of malonyl-CoA. The prenyltransferase spyF then conjugates geranylgeranyl pyrophosphate (GGPP) to TAL to form geranylgeranyl-triacetate lactone, for which the pathway-specific geranylgeranyl pyrophosphate synthase (GGPS) spyE is required to provide GGPP. Subsequently, geranylgeranyl-triacetate lactone is epoxidized at the terminal olein by the FAD-dependent monooxygenase spyC, followed by cyclization of the terpenoid component catalyzed by the terpene cyclase spyD to produce both the bicyclic sartorypyrone F and the monocyclic sartorypyrone D. Finally, the last step of the biosynthesis involves the acetylation of the meroterpenoids sartorypyrones D and F by the acetyltransferase SpyB to produce sartorypyrones A and G, respectively. This is Acetyltransferase spyB from Aspergillus fumigatus (strain ATCC MYA-4609 / CBS 101355 / FGSC A1100 / Af293) (Neosartorya fumigata).